A 105-amino-acid polypeptide reads, in one-letter code: Cell division protein FtsB (105 aa).

At 1-3 (MGK) the chain is on the cytoplasmic side. Residues 4–21 (LTLLLLALLVWLQYSLWF) traverse the membrane as a helical segment. The Periplasmic segment spans residues 22 to 105 (GKNGLHDYTR…QASGQQQNNR (84 aa)). Positions 33–62 (NDDVTAQQATNAKLKARNDQLFAEIDDLNG) form a coiled coil.

Belongs to the FtsB family. Part of a complex composed of FtsB, FtsL and FtsQ.

Its subcellular location is the cell inner membrane. In terms of biological role, essential cell division protein. May link together the upstream cell division proteins, which are predominantly cytoplasmic, with the downstream cell division proteins, which are predominantly periplasmic. The chain is Cell division protein FtsB from Klebsiella aerogenes (Enterobacter aerogenes).